A 510-amino-acid chain; its full sequence is Probable gamma-aminobutyrate transaminase 3, mitochondrial (510 aa).

The N-terminal 41 residues, 1–41, are a transit peptide targeting the mitochondrion; the sequence is MICRSLLLLRSNAASKASNIVKHVAATGCLPKYSSEAPARY. 166-167 contributes to the pyridoxal 5'-phosphate binding site; sequence GS. Residue Tyr199 coordinates substrate. Asp306 serves as a coordination point for pyridoxal 5'-phosphate. A substrate-binding site is contributed by Lys335. Lys335 bears the N6-(pyridoxal phosphate)lysine mark.

The protein belongs to the class-III pyridoxal-phosphate-dependent aminotransferase family.

It is found in the mitochondrion. It catalyses the reaction 4-aminobutanoate + pyruvate = succinate semialdehyde + L-alanine. The catalysed reaction is 4-aminobutanoate + glyoxylate = succinate semialdehyde + glycine. Functionally, transaminase that degrades gamma-amino butyric acid (GABA). This is Probable gamma-aminobutyrate transaminase 3, mitochondrial from Oryza sativa subsp. japonica (Rice).